The following is a 1311-amino-acid chain: Transcriptional regulator ATRX homolog (1311 aa).

The disordered stretch occupies residues 1–384 (MGKKNPNARH…KQKNKRKHIR (384 aa)). Over residues 28–40 (SRRESATESKSAS) the composition is skewed to basic and acidic residues. A compositionally biased stretch (low complexity) spans 61–83 (KASGKATVSSSSDSDQAVANSSA). Polar residues predominate over residues 114–125 (RGSQQKNVTIND). Phosphoserine is present on residues Ser-126 and Ser-127. Positions 155–166 (SDSEEVDEEEES) are enriched in acidic residues. A compositionally biased stretch (basic and acidic residues) spans 181–202 (KPEKNSSKASKESIEKRQKAQK). Positions 219–237 (RRGSLSSERSSRASSSRAE) are enriched in low complexity. Residues 241 to 265 (RPKRCVVRLKRVSLPKTKPAQKPKK) show a composition bias toward basic residues. 3 positions are modified to phosphoserine: Ser-267, Ser-268, and Ser-270. The span at 290–306 (EADSDYEAPAAEEEEEE) shows a compositional bias: acidic residues. Ser-336, Ser-338, Ser-342, and Ser-343 each carry phosphoserine. Over residues 336–351 (SESDKGSSDFEPEEKQ) the composition is skewed to basic and acidic residues. The span at 352–361 (KKKGRKRIKK) shows a compositional bias: basic residues. Positions 476–664 (ESQEKPGSGC…YCMIQFVKPN (189 aa)) constitute a Helicase ATP-binding domain. 489 to 496 (HCMGLGKT) lines the ATP pocket. The DEGH box motif lies at 615–618 (DEGH). Residues 837-878 (ASSGKVKKRKTRNGNAGGGDSDSDLEMLGGLGGGSSVQKDDP) are disordered. Ser-857 and Ser-859 each carry phosphoserine. Positions 905 to 1085 (RLLQQCEAIG…SRHYNQTDLM (181 aa)) constitute a Helicase C-terminal domain. A disordered region spans residues 1285–1311 (MAGGSVAHGPPAAPAPGFEPDKVYEID).

The protein belongs to the SNF2/RAD54 helicase family.

The protein resides in the nucleus. It is found in the chromosome. It catalyses the reaction ATP + H2O = ADP + phosphate + H(+). In terms of biological role, global transcriptional regulator. Modifies gene expression by affecting chromatin. The polypeptide is Transcriptional regulator ATRX homolog (XNP) (Drosophila melanogaster (Fruit fly)).